Here is a 616-residue protein sequence, read N- to C-terminus: Pyrophosphate--fructose 6-phosphate 1-phosphotransferase subunit alpha (616 aa).

It belongs to the phosphofructokinase type A (PFKA) family. PPi-dependent PFK group II subfamily. Clade 'Long' sub-subfamily. In terms of assembly, tetramer of two alpha (regulatory) and two beta (catalytic) chains.

The protein resides in the cytoplasm. The protein operates within carbohydrate degradation; glycolysis; D-glyceraldehyde 3-phosphate and glycerone phosphate from D-glucose: step 3/4. Its activity is regulated as follows. Allosterically activated by fructose 2,6-bisphosphate. Functionally, regulatory subunit of pyrophosphate--fructose 6-phosphate 1-phosphotransferase. The chain is Pyrophosphate--fructose 6-phosphate 1-phosphotransferase subunit alpha from Solanum tuberosum (Potato).